The primary structure comprises 359 residues: Histidinol-phosphate aminotransferase (359 aa).

Position 217 is an N6-(pyridoxal phosphate)lysine (Lys217).

Belongs to the class-II pyridoxal-phosphate-dependent aminotransferase family. Histidinol-phosphate aminotransferase subfamily. In terms of assembly, homodimer. The cofactor is pyridoxal 5'-phosphate.

The catalysed reaction is L-histidinol phosphate + 2-oxoglutarate = 3-(imidazol-4-yl)-2-oxopropyl phosphate + L-glutamate. The protein operates within amino-acid biosynthesis; L-histidine biosynthesis; L-histidine from 5-phospho-alpha-D-ribose 1-diphosphate: step 7/9. The polypeptide is Histidinol-phosphate aminotransferase (Salmonella paratyphi A (strain ATCC 9150 / SARB42)).